The primary structure comprises 271 residues: uncharacterized protein (271 aa).

Residues Met1–Cys18 form the signal peptide. Residues Ala19–Tyr187 lie on the Lumenal side of the membrane. Residues Phe188 to Trp208 form a helical membrane-spanning segment. Residues Gln209–Gly230 lie on the Cytoplasmic side of the membrane. Residues Phe231–Phe251 form a helical membrane-spanning segment. Topologically, residues Gln252–Leu271 are lumenal.

It is found in the endoplasmic reticulum membrane. This is an uncharacterized protein from Schizosaccharomyces pombe (strain 972 / ATCC 24843) (Fission yeast).